A 445-amino-acid polypeptide reads, in one-letter code: Chromosomal replication initiator protein DnaA (445 aa).

The segment at 1 to 71 (MEEVWLQAQS…SVQSLTDSQT (71 aa)) is domain I, interacts with DnaA modulators. Residues 71-108 (TKIELLIAKPKTEKPKQPAASEVTAAEPEACSGPDHST) form a domain II region. Residues 83-106 (EKPKQPAASEVTAAEPEACSGPDH) form a disordered region. The segment at 109–325 (NLNPKYTFDT…GMLIRLGAVS (217 aa)) is domain III, AAA+ region. G153, G155, K156, and T157 together coordinate ATP. The tract at residues 326–445 (SLTGKNITLD…VDTLRKGLLS (120 aa)) is domain IV, binds dsDNA.

This sequence belongs to the DnaA family. Oligomerizes as a right-handed, spiral filament on DNA at oriC.

The protein resides in the cytoplasm. Its function is as follows. Plays an essential role in the initiation and regulation of chromosomal replication. ATP-DnaA binds to the origin of replication (oriC) to initiate formation of the DNA replication initiation complex once per cell cycle. Binds the DnaA box (a 9 base pair repeat at the origin) and separates the double-stranded (ds)DNA. Forms a right-handed helical filament on oriC DNA; dsDNA binds to the exterior of the filament while single-stranded (ss)DNA is stabiized in the filament's interior. The ATP-DnaA-oriC complex binds and stabilizes one strand of the AT-rich DNA unwinding element (DUE), permitting loading of DNA polymerase. After initiation quickly degrades to an ADP-DnaA complex that is not apt for DNA replication. Binds acidic phospholipids. In Geobacter sulfurreducens (strain ATCC 51573 / DSM 12127 / PCA), this protein is Chromosomal replication initiator protein DnaA.